A 332-amino-acid chain; its full sequence is Aspartate carbamoyltransferase catalytic subunit (332 aa).

A disordered region spans residues 1–20; the sequence is MPNTHDTKNNVSPSEYAKFD. Carbamoyl phosphate contacts are provided by Arg-72 and Thr-73. Lys-100 provides a ligand contact to L-aspartate. Carbamoyl phosphate-binding residues include Arg-122, His-152, and Gln-155. Positions 186 and 241 each coordinate L-aspartate. The carbamoyl phosphate site is built by Gly-282 and Pro-283.

This sequence belongs to the aspartate/ornithine carbamoyltransferase superfamily. ATCase family. As to quaternary structure, heterododecamer (2C3:3R2) of six catalytic PyrB chains organized as two trimers (C3), and six regulatory PyrI chains organized as three dimers (R2).

It carries out the reaction carbamoyl phosphate + L-aspartate = N-carbamoyl-L-aspartate + phosphate + H(+). Its pathway is pyrimidine metabolism; UMP biosynthesis via de novo pathway; (S)-dihydroorotate from bicarbonate: step 2/3. Functionally, catalyzes the condensation of carbamoyl phosphate and aspartate to form carbamoyl aspartate and inorganic phosphate, the committed step in the de novo pyrimidine nucleotide biosynthesis pathway. The sequence is that of Aspartate carbamoyltransferase catalytic subunit from Psychrobacter sp. (strain TAD1).